A 194-amino-acid chain; its full sequence is Glycerol-3-phosphate acyltransferase (194 aa).

Helical transmembrane passes span 3–23, 52–72, 80–100, 112–132, 135–155, and 162–182; these read AGLFWIAGAYLLGSIPTGLLL, VGILTLTGDCLKGLLPVLLAW, MQAWVGLAAFCGHVFSVFLLF, VFLALAPLAVLGALAVFILLV, WRYISLGSIMAAAVMPLIIFF, and LLIATVLIAAVVIIKHHSNIS.

Belongs to the PlsY family. Probably interacts with PlsX.

The protein resides in the cell inner membrane. The enzyme catalyses an acyl phosphate + sn-glycerol 3-phosphate = a 1-acyl-sn-glycero-3-phosphate + phosphate. It participates in lipid metabolism; phospholipid metabolism. In terms of biological role, catalyzes the transfer of an acyl group from acyl-phosphate (acyl-PO(4)) to glycerol-3-phosphate (G3P) to form lysophosphatidic acid (LPA). This enzyme utilizes acyl-phosphate as fatty acyl donor, but not acyl-CoA or acyl-ACP. The protein is Glycerol-3-phosphate acyltransferase of Trichlorobacter lovleyi (strain ATCC BAA-1151 / DSM 17278 / SZ) (Geobacter lovleyi).